The following is a 759-amino-acid chain: Nucleolar RNA helicase 2-A (759 aa).

Residues 1-154 (MPVKVYAEEM…KKRKTDTTEI (154 aa)) form a disordered region. Residues 77–86 (ETAEECDGEQ) are compositionally biased toward acidic residues. A Q motif motif is present at residues 179–207 (GDFSKFPLSKETIKNLQAKGVSYLFPIQS). The Helicase ATP-binding domain maps to 210-389 (FHTAYSGKDV…KKYMRKQFEK (180 aa)). 223–230 (ARTGTGKT) lines the ATP pocket. The short motif at 332 to 335 (DEVD) is the DEAD box element. A Helicase C-terminal domain is found at 422-566 (DLVQVYSGSH…VGVPSLLNVA (145 aa)). The interval 709 to 759 (QESERNFDGPRNRGFGGRGRRPFDRRNNSRNSNRGGGGRGRNRNGGFRRGR) is disordered. Over residues 710–719 (ESERNFDGPR) the composition is skewed to basic and acidic residues. Over residues 748-759 (GRNRNGGFRRGR) the composition is skewed to basic residues.

It belongs to the DEAD box helicase family. DDX21/DDX50 subfamily. In terms of tissue distribution, widely expressed. Expressed at higher level in stomach. Expressed at higher level compared to ddx21-b.

The protein resides in the nucleus. The protein localises to the nucleolus. It is found in the nucleoplasm. It localises to the cytoplasm. Its subcellular location is the cytosol. The protein resides in the mitochondrion. The catalysed reaction is ATP + H2O = ADP + phosphate + H(+). Its function is as follows. RNA helicase that acts as a sensor of the transcriptional status of both RNA polymerase (Pol) I and II: promotes ribosomal RNA (rRNA) processing and transcription from polymerase II (Pol II). Binds various RNAs, such as rRNAs, snoRNAs, 7SK and, at lower extent, mRNAs. In the nucleolus, localizes to rDNA locus, where it directly binds rRNAs and snoRNAs, and promotes rRNA transcription, processing and modification. Required for rRNA 2'-O-methylation, possibly by promoting the recruitment of late-acting snoRNAs SNORD56 and SNORD58 with pre-ribosomal complexes. In the nucleoplasm, binds 7SK RNA and is recruited to the promoters of Pol II-transcribed genes: acts by facilitating the release of P-TEFb from inhibitory 7SK snRNP in a manner that is dependent on its helicase activity, thereby promoting transcription of its target genes. Required to prevent R-loop-associated DNA damage and transcription-associated genomic instability. The protein is Nucleolar RNA helicase 2-A (ddx21-a) of Xenopus laevis (African clawed frog).